Here is a 292-residue protein sequence, read N- to C-terminus: 4-hydroxy-tetrahydrodipicolinate synthase (292 aa).

Thr-44 lines the pyruvate pocket. The active-site Proton donor/acceptor is the Tyr-132. Lys-161 (schiff-base intermediate with substrate) is an active-site residue. Residue Ile-203 coordinates pyruvate.

Belongs to the DapA family. In terms of assembly, homotetramer.

Its subcellular location is the cytoplasm. The enzyme catalyses L-aspartate 4-semialdehyde + pyruvate = (2S,4S)-4-hydroxy-2,3,4,5-tetrahydrodipicolinate + H2O + H(+). It functions in the pathway amino-acid biosynthesis; L-lysine biosynthesis via DAP pathway; (S)-tetrahydrodipicolinate from L-aspartate: step 3/4. Is feedback inhibited by lysine. Is competitively inhibited by 2-oxobutyrate with respect to pyruvate. In terms of biological role, catalyzes the condensation of (S)-aspartate-beta-semialdehyde [(S)-ASA] and pyruvate to 4-hydroxy-tetrahydrodipicolinate (HTPA). This chain is 4-hydroxy-tetrahydrodipicolinate synthase, found in Rhizobium meliloti (Ensifer meliloti).